The primary structure comprises 282 residues: HTH-type transcriptional activator RhaR (282 aa).

The 99-residue stretch at 179–277 folds into the HTH araC/xylS-type domain; the sequence is DKLITALANS…GMTPSQWRHL (99 aa). 2 DNA-binding regions (H-T-H motif) span residues 196 to 217 and 244 to 267; these read DAFCQQEQCSERVLRQQFRAQT and ISEISMQCGFEDSNYFSVVFTRET.

Binds DNA as a dimer.

The protein resides in the cytoplasm. Its function is as follows. Activates expression of the rhaSR operon in response to L-rhamnose. This Salmonella schwarzengrund (strain CVM19633) protein is HTH-type transcriptional activator RhaR.